We begin with the raw amino-acid sequence, 100 residues long: Aspartyl/glutamyl-tRNA(Asn/Gln) amidotransferase subunit C (100 aa).

Belongs to the GatC family. In terms of assembly, heterotrimer of A, B and C subunits.

The catalysed reaction is L-glutamyl-tRNA(Gln) + L-glutamine + ATP + H2O = L-glutaminyl-tRNA(Gln) + L-glutamate + ADP + phosphate + H(+). The enzyme catalyses L-aspartyl-tRNA(Asn) + L-glutamine + ATP + H2O = L-asparaginyl-tRNA(Asn) + L-glutamate + ADP + phosphate + 2 H(+). In terms of biological role, allows the formation of correctly charged Asn-tRNA(Asn) or Gln-tRNA(Gln) through the transamidation of misacylated Asp-tRNA(Asn) or Glu-tRNA(Gln) in organisms which lack either or both of asparaginyl-tRNA or glutaminyl-tRNA synthetases. The reaction takes place in the presence of glutamine and ATP through an activated phospho-Asp-tRNA(Asn) or phospho-Glu-tRNA(Gln). This is Aspartyl/glutamyl-tRNA(Asn/Gln) amidotransferase subunit C from Erythrobacter litoralis (strain HTCC2594).